The sequence spans 91 residues: Acylphosphatase (91 aa).

Residues 5–91 form the Acylphosphatase-like domain; it reads CLHAYVGGRV…QGIAGFIVRR (87 aa). Catalysis depends on residues Arg20 and Asn38.

The protein belongs to the acylphosphatase family.

It catalyses the reaction an acyl phosphate + H2O = a carboxylate + phosphate + H(+). The polypeptide is Acylphosphatase (acyP) (Pseudomonas paraeruginosa (strain DSM 24068 / PA7) (Pseudomonas aeruginosa (strain PA7))).